We begin with the raw amino-acid sequence, 362 residues long: Phosphoserine aminotransferase (362 aa).

Arg-41 contributes to the L-glutamate binding site. Residues 75–76 (GS), Phe-101, Thr-152, Asp-173, and Gln-196 contribute to the pyridoxal 5'-phosphate site. Lys-197 is modified (N6-(pyridoxal phosphate)lysine). 239–240 (NT) contacts pyridoxal 5'-phosphate.

Belongs to the class-V pyridoxal-phosphate-dependent aminotransferase family. SerC subfamily. As to quaternary structure, homodimer. It depends on pyridoxal 5'-phosphate as a cofactor.

Its subcellular location is the cytoplasm. The enzyme catalyses O-phospho-L-serine + 2-oxoglutarate = 3-phosphooxypyruvate + L-glutamate. It catalyses the reaction 4-(phosphooxy)-L-threonine + 2-oxoglutarate = (R)-3-hydroxy-2-oxo-4-phosphooxybutanoate + L-glutamate. The protein operates within amino-acid biosynthesis; L-serine biosynthesis; L-serine from 3-phospho-D-glycerate: step 2/3. Functionally, catalyzes the reversible conversion of 3-phosphohydroxypyruvate to phosphoserine and of 3-hydroxy-2-oxo-4-phosphonooxybutanoate to phosphohydroxythreonine. This Leuconostoc mesenteroides subsp. mesenteroides (strain ATCC 8293 / DSM 20343 / BCRC 11652 / CCM 1803 / JCM 6124 / NCDO 523 / NBRC 100496 / NCIMB 8023 / NCTC 12954 / NRRL B-1118 / 37Y) protein is Phosphoserine aminotransferase.